A 373-amino-acid chain; its full sequence is Innexin shaking-B (373 aa).

Residues 1–21 (MLDIFRGLKSLVKISHVNTDS) lie on the Cytoplasmic side of the membrane. A helical membrane pass occupies residues 22–42 (PVFRLHYSITVIILMSFSLIV). Over 43 to 106 (TTRQYVGNPI…SAEATAADKK (64 aa)) the chain is Extracellular. A helical transmembrane segment spans residues 107–127 (IYKYYQWVCFCLFFQAILFYT). Residues 128–176 (PRWLWKSWEGGKIHALMMDLDIGICSEIEKKQKKKLLLDYLWDNLRYHN) are Cytoplasmic-facing. Residues 177-199 (WWAYRYYVCEFLSLCNVIGQMFL) form a helical membrane-spanning segment. Over 200 to 268 (MNRFFDGEFM…ILPLNVVNEK (69 aa)) the chain is Extracellular. The chain crosses the membrane as a helical span at residues 269–289 (IYIFLWFWFIILTILTTLTIF). Residues 290 to 373 (YRIIIIFSPR…PGMKGEIQDA (84 aa)) are Cytoplasmic-facing.

This sequence belongs to the pannexin family. As to quaternary structure, monomer.

The protein localises to the cell membrane. It is found in the cell junction. Its subcellular location is the gap junction. Structural component of the gap junctions at electrical synapses in distal and mid-depth levels in the lamina. In Anopheles gambiae (African malaria mosquito), this protein is Innexin shaking-B.